A 343-amino-acid polypeptide reads, in one-letter code: Anthranilate phosphoribosyltransferase (343 aa).

5-phospho-alpha-D-ribose 1-diphosphate-binding positions include Gly-78, 81 to 82, Thr-86, 88 to 91, 106 to 114, and Ser-118; these read GD, NIST, and KHGNRSVSS. Gly-78 provides a ligand contact to anthranilate. Ser-90 lines the Mg(2+) pocket. Asn-109 is a binding site for anthranilate. Position 164 (Arg-164) interacts with anthranilate. Asp-223 and Glu-224 together coordinate Mg(2+).

This sequence belongs to the anthranilate phosphoribosyltransferase family. In terms of assembly, homodimer. Requires Mg(2+) as cofactor.

The catalysed reaction is N-(5-phospho-beta-D-ribosyl)anthranilate + diphosphate = 5-phospho-alpha-D-ribose 1-diphosphate + anthranilate. It participates in amino-acid biosynthesis; L-tryptophan biosynthesis; L-tryptophan from chorismate: step 2/5. Catalyzes the transfer of the phosphoribosyl group of 5-phosphorylribose-1-pyrophosphate (PRPP) to anthranilate to yield N-(5'-phosphoribosyl)-anthranilate (PRA). The protein is Anthranilate phosphoribosyltransferase of Chlamydia caviae (strain ATCC VR-813 / DSM 19441 / 03DC25 / GPIC) (Chlamydophila caviae).